A 348-amino-acid chain; its full sequence is Dihydroorotase (348 aa).

Zn(2+) contacts are provided by His17 and His19. Substrate contacts are provided by residues 19–21 (HLR) and Asn45. Lys103, His140, and His178 together coordinate Zn(2+). Lys103 bears the N6-carboxylysine mark. His140 provides a ligand contact to substrate. Leu223 lines the substrate pocket. Residue Asp251 participates in Zn(2+) binding. Residue Asp251 is part of the active site. Residues His255 and Ala267 each coordinate substrate.

This sequence belongs to the metallo-dependent hydrolases superfamily. DHOase family. Class II DHOase subfamily. Homodimer. Zn(2+) serves as cofactor.

The enzyme catalyses (S)-dihydroorotate + H2O = N-carbamoyl-L-aspartate + H(+). It functions in the pathway pyrimidine metabolism; UMP biosynthesis via de novo pathway; (S)-dihydroorotate from bicarbonate: step 3/3. Its function is as follows. Catalyzes the reversible cyclization of carbamoyl aspartate to dihydroorotate. The chain is Dihydroorotase from Shigella boydii serotype 18 (strain CDC 3083-94 / BS512).